A 64-amino-acid chain; its full sequence is Large ribosomal subunit protein bL35 (64 aa).

Over residues 1–14 the composition is skewed to basic residues; it reads MKNKTHKGTAKRVK. The disordered stretch occupies residues 1 to 30; that stretch reads MKNKTHKGTAKRVKVTGSGKLVREQANRRH. The segment covering 21–30 has biased composition (basic and acidic residues); sequence LVREQANRRH.

The protein belongs to the bacterial ribosomal protein bL35 family.

The sequence is that of Large ribosomal subunit protein bL35 from Corynebacterium efficiens (strain DSM 44549 / YS-314 / AJ 12310 / JCM 11189 / NBRC 100395).